Reading from the N-terminus, the 1381-residue chain is Hepatocyte growth factor receptor (1381 aa).

The N-terminal stretch at 1-24 (MKAPAVLAPGILVLLFTLVQRSNG) is a signal peptide. The Extracellular portion of the chain corresponds to 25 to 934 (ECKEALTKSE…VQPDQNFTGL (910 aa)). The region spanning 27 to 515 (KEALTKSEMN…TGKKITKIPL (489 aa)) is the Sema domain. A glycan (N-linked (GlcNAc...) asparagine) is linked at Asn45. 4 cysteine pairs are disulfide-bonded: Cys95-Cys101, Cys98-Cys160, Cys133-Cys141, and Cys172-Cys175. Residue Asn106 is glycosylated (N-linked (GlcNAc...) asparagine). The N-linked (GlcNAc...) asparagine glycan is linked to Asn149. Residue Asn202 is glycosylated (N-linked (GlcNAc...) asparagine). 2 disulfide bridges follow: Cys298-Cys363 and Cys385-Cys397. N-linked (GlcNAc...) asparagine glycosylation is present at Asn399. Intrachain disulfides connect Cys520–Cys538, Cys526–Cys561, Cys529–Cys545, and Cys541–Cys551. IPT/TIG domains are found at residues 563–655 (PTIY…FSYV), 657–739 (PIIT…FSYR), and 742–836 (PIVY…LIYV). An O-linked (Man) threonine glycan is attached at Thr582. N-linked (GlcNAc...) asparagine glycosylation is found at Asn607 and Asn635. O-linked (Man) threonine glycans are attached at residues Thr676 and Thr761. 3 N-linked (GlcNAc...) asparagine glycosylation sites follow: Asn785, Asn879, and Asn930. A helical membrane pass occupies residues 935-955 (VAGVVSISIALLLLLGLFLWL). At 956-1381 (KKKKQIKDLG…QDNTDGEVDT (426 aa)) the chain is on the cytoplasmic side. Residue Ser966 is modified to Phosphoserine. The residue at position 977 (Thr977) is a Phosphothreonine. Phosphoserine is present on residues Ser990, Ser997, and Ser1000. Tyr1003 carries the phosphotyrosine modification. Residues 1078–1345 (VHFNEVIGRG…RISAIFSTFI (268 aa)) enclose the Protein kinase domain. ATP contacts are provided by residues 1084–1092 (IGRGHFGCV) and Lys1110. Asp1204 (proton acceptor) is an active-site residue. The segment at 1212–1381 (LDEKFTVKVA…QDNTDGEVDT (170 aa)) is interaction with RANBP9. Tyr1230 carries the post-translational modification Phosphotyrosine. Phosphotyrosine; by autocatalysis occurs at positions 1234 and 1235. The residue at position 1289 (Thr1289) is a Phosphothreonine. An interaction with MUC20 region spans residues 1320-1359 (WHPKAEMRPSFSELVSRISAIFSTFIGEHYVHVNATYVNV). Residues Tyr1349 and Tyr1356 each carry the phosphotyrosine; by autocatalysis modification. Tyr1365 is subject to Phosphotyrosine.

The protein belongs to the protein kinase superfamily. Tyr protein kinase family. In terms of assembly, heterodimer made of an alpha chain (50 kDa) and a beta chain (145 kDa) which are disulfide linked. Binds PLXNB1. Interacts when phosphorylated with downstream effectors including STAT3, PIK3R1, SRC, PCLG1, GRB2 and GAB1. Interacts with SPSB1, SPSB2 and SPSB4. Interacts with INPP5D/SHIP1. When phosphorylated at Tyr-1356, interacts with INPPL1/SHIP2. Interacts with RANBP9 and RANBP10, as well as SPSB1, SPSB2, SPSB3 and SPSB4. SPSB1 binding occurs in the presence and in the absence of HGF, however HGF treatment has a positive effect on this interaction. Interacts with MUC20; prevents interaction with GRB2 and suppresses hepatocyte growth factor-induced cell proliferation. Interacts with GRB10. Interacts with PTPN1 and PTPN2. Interacts with HSP90AA1 and HSP90AB1; the interaction suppresses MET kinase activity. Interacts with tensin TNS3. Interacts (when phosphorylated) with tensin TNS4 (via SH2 domain); the interaction increases MET protein stability by inhibiting MET endocytosis and subsequent lysosomal degradation. Post-translationally, autophosphorylated in response to ligand binding on Tyr-1234 and Tyr-1235 in the kinase domain leading to further phosphorylation of Tyr-1349 and Tyr-1356 in the C-terminal multifunctional docking site. Dephosphorylated by PTPRJ at Tyr-1349 and Tyr-1365. Dephosphorylated by PTPN1 and PTPN2. Ubiquitinated. Ubiquitination by CBL regulates the receptor stability and activity through proteasomal degradation. In terms of processing, O-mannosylation of IPT/TIG domains by TMEM260 is required for protein maturation. O-mannosylated residues are composed of single mannose glycans that are not elongated or modified.

It localises to the membrane. It catalyses the reaction L-tyrosyl-[protein] + ATP = O-phospho-L-tyrosyl-[protein] + ADP + H(+). Receptor tyrosine kinase that transduces signals from the extracellular matrix into the cytoplasm by binding to hepatocyte growth factor/HGF ligand. Regulates many physiological processes including proliferation, scattering, morphogenesis and survival. Ligand binding at the cell surface induces autophosphorylation of MET on its intracellular domain that provides docking sites for downstream signaling molecules. Following activation by ligand, interacts with the PI3-kinase subunit PIK3R1, PLCG1, SRC, GRB2, STAT3 or the adapter GAB1. Recruitment of these downstream effectors by MET leads to the activation of several signaling cascades including the RAS-ERK, PI3 kinase-AKT, or PLCgamma-PKC. The RAS-ERK activation is associated with the morphogenetic effects while PI3K/AKT coordinates prosurvival effects. During embryonic development, MET signaling plays a role in gastrulation, development and migration of muscles and neuronal precursors, angiogenesis and kidney formation. In adults, participates in wound healing as well as organ regeneration and tissue remodeling. Also promotes differentiation and proliferation of hematopoietic cells. The chain is Hepatocyte growth factor receptor (MET) from Callithrix jacchus (White-tufted-ear marmoset).